Reading from the N-terminus, the 54-residue chain is Kazal-type inhibitor-like protein (54 aa).

A Kazal-like domain is found at 1 to 54; the sequence is MKVNCKGYPTKFCFGKPLPHCASDGKTYPNRCRFCNAFVKSHGLITLRYYGKCK. Cystine bridges form between Cys-5–Cys-35, Cys-13–Cys-32, and Cys-21–Cys-53.

May form disulfide-linked dimers or trimers (in vitro). As to expression, expressed by the venom gland.

The protein localises to the secreted. Partially inhibits trypsin in vitro at slightly acidic pH and concentrations in excess of 0.3 mM. Has no protease inhibitory activity at neutral or basic pH. Has no antibacterial activity. Shows no toxicity in vertebrates apart from transient paw edema in mouse. The polypeptide is Kazal-type inhibitor-like protein (Bothriechis schlegelii (Eyelash palm pitviper)).